Here is a 346-residue protein sequence, read N- to C-terminus: Phosphoribosylformylglycinamidine cyclo-ligase (346 aa).

This sequence belongs to the AIR synthase family.

The protein localises to the cytoplasm. The catalysed reaction is 2-formamido-N(1)-(5-O-phospho-beta-D-ribosyl)acetamidine + ATP = 5-amino-1-(5-phospho-beta-D-ribosyl)imidazole + ADP + phosphate + H(+). It functions in the pathway purine metabolism; IMP biosynthesis via de novo pathway; 5-amino-1-(5-phospho-D-ribosyl)imidazole from N(2)-formyl-N(1)-(5-phospho-D-ribosyl)glycinamide: step 2/2. This Bacillus cereus (strain B4264) protein is Phosphoribosylformylglycinamidine cyclo-ligase.